We begin with the raw amino-acid sequence, 352 residues long: MDYQVSSPTYDIDYYTSEPCQKINVKQIAARLLPPLYSLVFIFGFVGNILVVLILINCKRLKSMTDIYLLNLAISDLLFLLTVPFWAHYAAAQWDFGNIMCQLLTGLYFIGFFSGIFFIILLTIDRYLAIVHAVFALKARTVTFGVVTSVITWVVAVFASLPGIIFTRSQREGLHYTCSSHFPYSQYQFWKNFRTLKIVILGLVLPLLVMVICYSGILKTLLRCRNEKKRHRAVRLIFTIMIVYFLFWAPYNIVLLLNTFQEFFGLNNCSSSNRLDQAMQVTETLGMTHCCINPIIYAFVGEKFRNYLLVFFQKHIAKRFCKCCSIFQQEAPERASSVYTRTTGEQEISVGL.

Over 1–30 the chain is Extracellular; sequence MDYQVSSPTYDIDYYTSEPCQKINVKQIAA. The residue at position 3 (Tyr-3) is a Sulfotyrosine. 2 O-linked (GalNAc...) serine glycosylation sites follow: Ser-6 and Ser-7. Sulfotyrosine occurs at positions 10, 14, and 15. Disulfide bonds link Cys-20/Cys-269 and Cys-101/Cys-178. The helical transmembrane segment at 31–58 threads the bilayer; sequence RLLPPLYSLVFIFGFVGNILVVLILINC. Residues 59–68 lie on the Cytoplasmic side of the membrane; it reads KRLKSMTDIY. A helical transmembrane segment spans residues 69-89; the sequence is LLNLAISDLLFLLTVPFWAHY. Topologically, residues 90–102 are extracellular; the sequence is AAAQWDFGNIMCQ. The chain crosses the membrane as a helical span at residues 103–124; sequence LLTGLYFIGFFSGIFFIILLTI. Residues 125–141 lie on the Cytoplasmic side of the membrane; it reads DRYLAIVHAVFALKART. A helical membrane pass occupies residues 142-166; sequence VTFGVVTSVITWVVAVFASLPGIIF. At 167-198 the chain is on the extracellular side; the sequence is TRSQREGLHYTCSSHFPYSQYQFWKNFRTLKI. A helical transmembrane segment spans residues 199 to 218; it reads VILGLVLPLLVMVICYSGIL. Residues 219–235 lie on the Cytoplasmic side of the membrane; it reads KTLLRCRNEKKRHRAVR. The helical transmembrane segment at 236 to 260 threads the bilayer; sequence LIFTIMIVYFLFWAPYNIVLLLNTF. At 261–277 the chain is on the extracellular side; sequence QEFFGLNNCSSSNRLDQ. Residues 278–301 form a helical membrane-spanning segment; that stretch reads AMQVTETLGMTHCCINPIIYAFVG. Over 302-352 the chain is Cytoplasmic; that stretch reads EKFRNYLLVFFQKHIAKRFCKCCSIFQQEAPERASSVYTRTTGEQEISVGL. S-palmitoyl cysteine attachment occurs at residues Cys-321, Cys-323, and Cys-324. Phosphoserine; by BARK1 occurs at positions 336, 337, and 349.

This sequence belongs to the G-protein coupled receptor 1 family. Interacts with PRAF2. Efficient ligand binding to CCL3/MIP-1alpha and CCL4/MIP-1beta requires sulfation, O-glycosylation and sialic acid modifications. Glycosylation on Ser-6 is required for efficient binding of CCL4. Interacts with GRK2. Interacts with ARRB1 and ARRB2. Interacts with CNIH4. Interacts with S100A4; this interaction stimulates T-lymphocyte chemotaxis. Sulfated on at least 2 of the N-terminal tyrosines. Sulfation is required for efficient binding of the chemokines, CCL3 and CCL4. Post-translationally, palmitoylation in the C-terminal is important for cell surface expression. In terms of processing, phosphorylation on serine residues in the C-terminal is stimulated by binding CC chemokines especially by APO-RANTES. O-glycosylated, but not N-glycosylated. Ser-6 appears to be the major site even if Ser-7 may be also O-glycosylated. Also sialylated glycans present which contribute to chemokine binding. Thr-16 and Ser-17 may also be glycosylated and, if so, with small moieties such as a T-antigen.

Its subcellular location is the cell membrane. Receptor for a number of inflammatory CC-chemokines including CCL3/MIP-1-alpha, CCL4/MIP-1-beta and RANTES and subsequently transduces a signal by increasing the intracellular calcium ion level. May play a role in the control of granulocytic lineage proliferation or differentiation. Participates in T-lymphocyte migration to the infection site by acting as a chemotactic receptor. The sequence is that of C-C chemokine receptor type 5 (CCR5) from Mandrillus leucophaeus (Drill).